Here is a 151-residue protein sequence, read N- to C-terminus: Potassium/proton antiporter CemA (151 aa).

A run of 2 helical transmembrane segments spans residues 7–27 (LPSLLYLVFIVLLPWGVSSSF) and 107–127 (ILHFSTNIICLAILSGSFFLG).

It belongs to the CemA family.

The protein localises to the plastid. Its subcellular location is the chloroplast inner membrane. It carries out the reaction K(+)(in) + H(+)(out) = K(+)(out) + H(+)(in). Functionally, contributes to K(+)/H(+) antiport activity by supporting proton efflux to control proton extrusion and homeostasis in chloroplasts in a light-dependent manner to modulate photosynthesis. Prevents excessive induction of non-photochemical quenching (NPQ) under continuous-light conditions. Indirectly promotes efficient inorganic carbon uptake into chloroplasts. This Aegilops crassa (Persian goatgrass) protein is Potassium/proton antiporter CemA.